We begin with the raw amino-acid sequence, 106 residues long: Cell division protein FtsL (106 aa).

Topologically, residues 1–22 are cytoplasmic; sequence MPRQSPPNLAKLIALDLLTVGR. Residues 23–43 form a helical membrane-spanning segment; sequence VPLLLLVLIFSCAMGVVFMTH. Over 44 to 106 the chain is Periplasmic; it reads HTRQAISAKD…SDKEVVINLK (63 aa).

This sequence belongs to the FtsL family. Part of a complex composed of FtsB, FtsL and FtsQ.

It is found in the cell inner membrane. In terms of biological role, essential cell division protein. May link together the upstream cell division proteins, which are predominantly cytoplasmic, with the downstream cell division proteins, which are predominantly periplasmic. This Vibrio cholerae serotype O1 (strain ATCC 39315 / El Tor Inaba N16961) protein is Cell division protein FtsL.